Consider the following 197-residue polypeptide: Ribosomal RNA large subunit methyltransferase E (197 aa).

Positions 50, 52, 70, 88, and 111 each coordinate S-adenosyl-L-methionine. Catalysis depends on Lys151, which acts as the Proton acceptor.

It belongs to the class I-like SAM-binding methyltransferase superfamily. RNA methyltransferase RlmE family.

Its subcellular location is the cytoplasm. It carries out the reaction uridine(2552) in 23S rRNA + S-adenosyl-L-methionine = 2'-O-methyluridine(2552) in 23S rRNA + S-adenosyl-L-homocysteine + H(+). In terms of biological role, specifically methylates the uridine in position 2552 of 23S rRNA at the 2'-O position of the ribose in the fully assembled 50S ribosomal subunit. The protein is Ribosomal RNA large subunit methyltransferase E of Syntrophobacter fumaroxidans (strain DSM 10017 / MPOB).